We begin with the raw amino-acid sequence, 130 residues long: Sec-independent protein translocase protein TatB (130 aa).

A helical transmembrane segment spans residues 1-21; it reads MFDISFTELIVIGIVALVVIG. A disordered region spans residues 70 to 130; the sequence is VDSFQNSVHS…TPKEPRQSGS (61 aa). 2 stretches are compositionally biased toward basic and acidic residues: residues 80–89 and 96–111; these read EINKIQETAD and PEKE…KTEP.

It belongs to the TatB family. As to quaternary structure, the Tat system comprises two distinct complexes: a TatABC complex, containing multiple copies of TatA, TatB and TatC subunits, and a separate TatA complex, containing only TatA subunits. Substrates initially bind to the TatABC complex, which probably triggers association of the separate TatA complex to form the active translocon.

The protein resides in the cell inner membrane. Its function is as follows. Part of the twin-arginine translocation (Tat) system that transports large folded proteins containing a characteristic twin-arginine motif in their signal peptide across membranes. Together with TatC, TatB is part of a receptor directly interacting with Tat signal peptides. TatB may form an oligomeric binding site that transiently accommodates folded Tat precursor proteins before their translocation. The protein is Sec-independent protein translocase protein TatB of Nitrosomonas eutropha (strain DSM 101675 / C91 / Nm57).